A 622-amino-acid chain; its full sequence is MSDVSADGGFLSAEQATTPVAIPTPYPSLTVSASYKEKSSGRRRPVRPSFDAAADNEFITLLHGSDPVKVELNRLENEVRDKDRELSEANAEIKALRLSERQREKACEELTDELAKLDGKLKLTESLLQSKNLEIKKINEEKKASMAAQFAAEATLRRVHAAQKDDDMPPIEAILAPLEAELKLARSEIGKLQEDNRALDRLTKSKEAALLDAERTVETALAKAALVDDLQNKNQELMKQIEICQEENKILDRMHRQKVAEVEKLTQTVRELEEAVLAGGAAANAVRDYQRKFQEMNEERKTLDRELARAKVTANRVATVVANEWKDGNDKVMPVKQWLEERRFLQGEMQQLRDKLAISDRAAKSEAQLKDKFQLRLRVLEETLRGTSSISIRNTPEGRSMSNGPSRRQSIGGSDNLQKFASNGFLSKKTPMRNSFTSNSTSVLKNAKGTSKSFDGGTRSLDRGKALLKGPGNYSFNKACDETKESESPNTWKEDSEEKPPSELPAPATEDNVPGVLYDLLQKEVVALRKSSHEKDQSLKDKDDAIEMLAKKVETLTKAMEVEAKKMRREVAAMEKEVAAMRVDKDQDNRAKRSSNTKPSSNTAQILAARAAGRSGLTRSTQ.

Positions 1-27 (MSDVSADGGFLSAEQATTPVAIPTPYP) are disordered. Residues 66–365 (DPVKVELNRL…LAISDRAAKS (300 aa)) adopt a coiled-coil conformation. Positions 250 to 483 (ILDRMHRQKV…YSFNKACDET (234 aa)) are required for targeting to microtubules. Disordered stretches follow at residues 388–512 (SSIS…TEDN) and 579–622 (AAMR…RSTQ). 2 stretches are compositionally biased toward polar residues: residues 400–425 (SMSN…SNGF) and 432–453 (MRNS…TSKS). Composition is skewed to basic and acidic residues over residues 479-501 (ACDE…EKPP) and 579-591 (AAMR…DNRA). Positions 541-590 (DKDDAIEMLAKKVETLTKAMEVEAKKMRREVAAMEKEVAAMRVDKDQDNR) form a coiled coil. Positions 594–605 (SSNTKPSSNTAQ) are enriched in polar residues.

The protein belongs to the MAP70 family. Interacts with MAP70.5 and itself.

The protein localises to the cytoplasm. Its subcellular location is the cytoskeleton. It localises to the phragmoplast. The protein resides in the spindle. In terms of biological role, plant-specific protein that interact with microtubules. In association with MAP70.5, is essential for the normal banding pattern of secondary cell wall and for the proper development of xylem tracheary elements and wood formation. This chain is Microtubule-associated protein 70-1 (MAP70.1), found in Arabidopsis thaliana (Mouse-ear cress).